A 247-amino-acid polypeptide reads, in one-letter code: Adenosylcobinamide-GDP ribazoletransferase (247 aa).

6 helical membrane passes run 34–54, 59–79, 113–133, 138–158, 171–193, and 197–219; these read IVMF…IFIL, CGIP…TGGF, GGLA…ELAL, MLAA…LLMY, VFIG…IIAT, and PGMQ…GQLL.

It belongs to the CobS family. It depends on Mg(2+) as a cofactor.

It is found in the cell inner membrane. The enzyme catalyses alpha-ribazole + adenosylcob(III)inamide-GDP = adenosylcob(III)alamin + GMP + H(+). The catalysed reaction is alpha-ribazole 5'-phosphate + adenosylcob(III)inamide-GDP = adenosylcob(III)alamin 5'-phosphate + GMP + H(+). The protein operates within cofactor biosynthesis; adenosylcobalamin biosynthesis; adenosylcobalamin from cob(II)yrinate a,c-diamide: step 7/7. In terms of biological role, joins adenosylcobinamide-GDP and alpha-ribazole to generate adenosylcobalamin (Ado-cobalamin). Also synthesizes adenosylcobalamin 5'-phosphate from adenosylcobinamide-GDP and alpha-ribazole 5'-phosphate. The sequence is that of Adenosylcobinamide-GDP ribazoletransferase from Salmonella newport (strain SL254).